The following is a 469-amino-acid chain: tRNA-2-methylthio-N(6)-dimethylallyladenosine synthase (469 aa).

One can recognise an MTTase N-terminal domain in the interval 22–142; sequence RKVFIKTYGC…LPEALRRAKE (121 aa). [4Fe-4S] cluster is bound by residues Cys31, Cys67, Cys105, Cys183, Cys187, and Cys190. Positions 169 to 401 constitute a Radical SAM core domain; sequence RARGVTAFLT…QALLLKQQQE (233 aa). A TRAM domain is found at 404 to 466; it reads ESCIGKEIDL…TNSLFAERAE (63 aa).

The protein belongs to the methylthiotransferase family. MiaB subfamily. In terms of assembly, monomer. It depends on [4Fe-4S] cluster as a cofactor.

The protein localises to the cytoplasm. It carries out the reaction N(6)-dimethylallyladenosine(37) in tRNA + (sulfur carrier)-SH + AH2 + 2 S-adenosyl-L-methionine = 2-methylsulfanyl-N(6)-dimethylallyladenosine(37) in tRNA + (sulfur carrier)-H + 5'-deoxyadenosine + L-methionine + A + S-adenosyl-L-homocysteine + 2 H(+). Functionally, catalyzes the methylthiolation of N6-(dimethylallyl)adenosine (i(6)A), leading to the formation of 2-methylthio-N6-(dimethylallyl)adenosine (ms(2)i(6)A) at position 37 in tRNAs that read codons beginning with uridine. The protein is tRNA-2-methylthio-N(6)-dimethylallyladenosine synthase of Rhizobium etli (strain ATCC 51251 / DSM 11541 / JCM 21823 / NBRC 15573 / CFN 42).